Reading from the N-terminus, the 476-residue chain is Adenosylhomocysteinase (476 aa).

The substrate site is built by Thr-67, Asp-142, and Glu-202. An NAD(+)-binding site is contributed by 203 to 205 (TTT). Residues Lys-232 and Asp-236 each contribute to the substrate site. NAD(+)-binding positions include Asn-237, 266 to 271 (GYGDVG), Glu-289, Asn-324, 345 to 347 (IGH), and Asn-390.

The protein belongs to the adenosylhomocysteinase family. NAD(+) serves as cofactor.

Its subcellular location is the cytoplasm. It carries out the reaction S-adenosyl-L-homocysteine + H2O = L-homocysteine + adenosine. It functions in the pathway amino-acid biosynthesis; L-homocysteine biosynthesis; L-homocysteine from S-adenosyl-L-homocysteine: step 1/1. May play a key role in the regulation of the intracellular concentration of adenosylhomocysteine. The polypeptide is Adenosylhomocysteinase (Prochlorococcus marinus (strain MIT 9313)).